Consider the following 308-residue polypeptide: Coenzyme PQQ synthesis protein B (308 aa).

It belongs to the PqqB family.

Its pathway is cofactor biosynthesis; pyrroloquinoline quinone biosynthesis. In terms of biological role, may be involved in the transport of PQQ or its precursor to the periplasm. This is Coenzyme PQQ synthesis protein B from Klebsiella pneumoniae (strain 342).